A 305-amino-acid chain; its full sequence is MRLVVVAGPTASGKTALAIALARRLGGEIVNADSQQVYRGLDVGTAKPTAEERAAAPHHLLDLVEPGEGMDAARFAALADAAIAGIAARGRVPIVAGGTGLYVRALLHGVVEAPGRDPALRAALEEEAARLGRPAVHARLAAVDPAAAALIRPNDLVRVVRALEIAAGGRTPSELYRAHAFREDRYDAALLALDPPRAELHARIDARVRAMFAGGLLDEARALEARFDGALPARLPIGYAEAAAHLRGELDLEEAIRRVQVAHRRYARRQVIWLRKERGVAWIAPPHDVEALARRVLEPRPPAIR.

An ATP-binding site is contributed by 8 to 15; the sequence is GPTASGKT. 10–15 contributes to the substrate binding site; sequence TASGKT. Residues 33-36 form an interaction with substrate tRNA region; the sequence is DSQQ.

It belongs to the IPP transferase family. In terms of assembly, monomer. The cofactor is Mg(2+).

The enzyme catalyses adenosine(37) in tRNA + dimethylallyl diphosphate = N(6)-dimethylallyladenosine(37) in tRNA + diphosphate. Functionally, catalyzes the transfer of a dimethylallyl group onto the adenine at position 37 in tRNAs that read codons beginning with uridine, leading to the formation of N6-(dimethylallyl)adenosine (i(6)A). The chain is tRNA dimethylallyltransferase from Anaeromyxobacter sp. (strain K).